The chain runs to 636 residues: Ligand-gated ion channel 4 (636 aa).

The first 25 residues, 1–25, serve as a signal peptide directing secretion; the sequence is MVICHSCTTFCILLVIDLVPCRIVG. The Extracellular segment spans residues 26–326; the sequence is MENVENRVMF…IHMHRRPLFY (301 aa). N-linked (GlcNAc...) asparagine glycosylation is found at asparagine 45, asparagine 141, asparagine 179, and asparagine 227. Cysteines 240 and 254 form a disulfide. Asparagine 284 is a glycosylation site (N-linked (GlcNAc...) asparagine). The next 3 membrane-spanning stretches (helical) occupy residues 327–347, 357–377, and 383–403; these read VFNH…GFLM, MIIT…ESIP, and VPLI…ATCV. At 404-602 the chain is on the cytoplasmic side; sequence NVITLNMHRN…QLASVVDRLL (199 aa). The chain crosses the membrane as a helical span at residues 603 to 623; the sequence is LCLFCTATLFTIICLLIVPVV.

Belongs to the ligand-gated ion channel (TC 1.A.9) family.

It is found in the postsynaptic cell membrane. Its subcellular location is the cell membrane. Functionally, acetylcholine receptor. In Caenorhabditis briggsae, this protein is Ligand-gated ion channel 4.